The sequence spans 239 residues: Ribonuclease 3 (239 aa).

The region spanning 12–137 (RAKLEALIGH…LIAAIYLDGG (126 aa)) is the RNase III domain. E50 contacts Mg(2+). The active site involves D54. The Mg(2+) site is built by D123 and E126. E126 is a catalytic residue. The DRBM domain occupies 162–231 (DAKTELQEWS…ATKMLEREGI (70 aa)).

The protein belongs to the ribonuclease III family. In terms of assembly, homodimer. Mg(2+) is required as a cofactor.

It is found in the cytoplasm. It catalyses the reaction Endonucleolytic cleavage to 5'-phosphomonoester.. Digests double-stranded RNA. Involved in the processing of primary rRNA transcript to yield the immediate precursors to the large and small rRNAs (23S and 16S). Processes some mRNAs, and tRNAs when they are encoded in the rRNA operon. Processes pre-crRNA and tracrRNA of type II CRISPR loci if present in the organism. This chain is Ribonuclease 3, found in Rhizobium etli (strain ATCC 51251 / DSM 11541 / JCM 21823 / NBRC 15573 / CFN 42).